A 470-amino-acid chain; its full sequence is Aldehyde dehydrogenase family 3 comG (470 aa).

Residue 196–201 (GSVKVG) participates in NAD(+) binding. Residues Glu-218 and Cys-252 contribute to the active site.

Belongs to the aldehyde dehydrogenase family.

The protein localises to the cytoplasm. It catalyses the reaction an aldehyde + NADP(+) + H2O = a carboxylate + NADPH + 2 H(+). It carries out the reaction an aldehyde + NAD(+) + H2O = a carboxylate + NADH + 2 H(+). This chain is Aldehyde dehydrogenase family 3 comG (comG), found in Dictyostelium discoideum (Social amoeba).